The chain runs to 437 residues: Serine hydroxymethyltransferase (437 aa).

Residues leucine 130 and 134–136 (GHL) contribute to the (6S)-5,6,7,8-tetrahydrofolate site. Lysine 239 is subject to N6-(pyridoxal phosphate)lysine.

It belongs to the SHMT family. As to quaternary structure, homodimer. Requires pyridoxal 5'-phosphate as cofactor.

The protein localises to the cytoplasm. The catalysed reaction is (6R)-5,10-methylene-5,6,7,8-tetrahydrofolate + glycine + H2O = (6S)-5,6,7,8-tetrahydrofolate + L-serine. It participates in one-carbon metabolism; tetrahydrofolate interconversion. The protein operates within amino-acid biosynthesis; glycine biosynthesis; glycine from L-serine: step 1/1. In terms of biological role, catalyzes the reversible interconversion of serine and glycine with tetrahydrofolate (THF) serving as the one-carbon carrier. This reaction serves as the major source of one-carbon groups required for the biosynthesis of purines, thymidylate, methionine, and other important biomolecules. Also exhibits THF-independent aldolase activity toward beta-hydroxyamino acids, producing glycine and aldehydes, via a retro-aldol mechanism. The polypeptide is Serine hydroxymethyltransferase (Bartonella quintana (strain Toulouse) (Rochalimaea quintana)).